The sequence spans 548 residues: Chaperonin GroEL (548 aa).

ATP contacts are provided by residues 29 to 32 (TLGP), Lys-50, 86 to 90 (DGTTT), Gly-414, 478 to 480 (NAA), and Asp-494.

The protein belongs to the chaperonin (HSP60) family. Forms a cylinder of 14 subunits composed of two heptameric rings stacked back-to-back. Interacts with the co-chaperonin GroES.

The protein localises to the cytoplasm. The enzyme catalyses ATP + H2O + a folded polypeptide = ADP + phosphate + an unfolded polypeptide.. In terms of biological role, together with its co-chaperonin GroES, plays an essential role in assisting protein folding. The GroEL-GroES system forms a nano-cage that allows encapsulation of the non-native substrate proteins and provides a physical environment optimized to promote and accelerate protein folding. The protein is Chaperonin GroEL of Psychrobacter sp. (strain PRwf-1).